The sequence spans 387 residues: GTPase Obg (387 aa).

The Obg domain occupies 1–159 (MKFVDEVEIR…RSLKLELLLL (159 aa)). An OBG-type G domain is found at 160–333 (ADVGLLGLPN…LTQKVMTFIE (174 aa)). GTP contacts are provided by residues 166-173 (GLPNAGKS), 191-195 (FTTLV), 213-216 (DIPG), 283-286 (NKLD), and 314-316 (SAF). The Mg(2+) site is built by Ser-173 and Thr-193. The interval 361–387 (AAHSQDDDLDDDDWDEDDYDVEVEYRQ) is disordered. Positions 367–387 (DDLDDDDWDEDDYDVEVEYRQ) are enriched in acidic residues.

Belongs to the TRAFAC class OBG-HflX-like GTPase superfamily. OBG GTPase family. As to quaternary structure, monomer. Mg(2+) is required as a cofactor.

It localises to the cytoplasm. Functionally, an essential GTPase which binds GTP, GDP and possibly (p)ppGpp with moderate affinity, with high nucleotide exchange rates and a fairly low GTP hydrolysis rate. Plays a role in control of the cell cycle, stress response, ribosome biogenesis and in those bacteria that undergo differentiation, in morphogenesis control. In Colwellia psychrerythraea (strain 34H / ATCC BAA-681) (Vibrio psychroerythus), this protein is GTPase Obg.